A 365-amino-acid chain; its full sequence is DNA replication and repair protein RecF (365 aa).

30–37 (GLNGSGKT) serves as a coordination point for ATP.

The protein belongs to the RecF family.

The protein localises to the cytoplasm. The RecF protein is involved in DNA metabolism; it is required for DNA replication and normal SOS inducibility. RecF binds preferentially to single-stranded, linear DNA. It also seems to bind ATP. The protein is DNA replication and repair protein RecF of Cellvibrio japonicus (strain Ueda107) (Pseudomonas fluorescens subsp. cellulosa).